The following is a 434-amino-acid chain: Nicotinate phosphoribosyltransferase (434 aa).

H242 is subject to Phosphohistidine; by autocatalysis.

Belongs to the NAPRTase family. Post-translationally, transiently phosphorylated on a His residue during the reaction cycle. Phosphorylation strongly increases the affinity for substrates and increases the rate of nicotinate D-ribonucleotide production. Dephosphorylation regenerates the low-affinity form of the enzyme, leading to product release.

The catalysed reaction is nicotinate + 5-phospho-alpha-D-ribose 1-diphosphate + ATP + H2O = nicotinate beta-D-ribonucleotide + ADP + phosphate + diphosphate. Its pathway is cofactor biosynthesis; NAD(+) biosynthesis; nicotinate D-ribonucleotide from nicotinate: step 1/1. Its function is as follows. Catalyzes the synthesis of beta-nicotinate D-ribonucleotide from nicotinate and 5-phospho-D-ribose 1-phosphate at the expense of ATP. This chain is Nicotinate phosphoribosyltransferase, found in Rhizobium etli (strain ATCC 51251 / DSM 11541 / JCM 21823 / NBRC 15573 / CFN 42).